We begin with the raw amino-acid sequence, 545 residues long: Membrane protein insertase YidC (545 aa).

A run of 6 helical transmembrane segments spans residues 10-30 (AIYL…IFFS), 319-339 (LLYF…NVIP), 341-361 (WGLS…PLTF), 407-427 (LGGC…YGLV), 467-487 (ILPF…SNVS), and 502-522 (MPIM…IYWI).

Belongs to the OXA1/ALB3/YidC family. Type 1 subfamily. In terms of assembly, interacts with the Sec translocase complex via SecD. Specifically interacts with transmembrane segments of nascent integral membrane proteins during membrane integration.

It localises to the cell inner membrane. Functionally, required for the insertion and/or proper folding and/or complex formation of integral membrane proteins into the membrane. Involved in integration of membrane proteins that insert both dependently and independently of the Sec translocase complex, as well as at least some lipoproteins. Aids folding of multispanning membrane proteins. The chain is Membrane protein insertase YidC from Borrelia hermsii (strain HS1 / DAH).